We begin with the raw amino-acid sequence, 319 residues long: 4-hydroxy-3-methylbut-2-enyl diphosphate reductase (319 aa).

Cys15 contacts [4Fe-4S] cluster. Positions 44 and 77 each coordinate (2E)-4-hydroxy-3-methylbut-2-enyl diphosphate. Residues His44 and His77 each contribute to the dimethylallyl diphosphate site. Isopentenyl diphosphate-binding residues include His44 and His77. Residue Cys99 coordinates [4Fe-4S] cluster. Position 127 (His127) interacts with (2E)-4-hydroxy-3-methylbut-2-enyl diphosphate. His127 serves as a coordination point for dimethylallyl diphosphate. His127 contributes to the isopentenyl diphosphate binding site. Glu129 (proton donor) is an active-site residue. Thr172 is a binding site for (2E)-4-hydroxy-3-methylbut-2-enyl diphosphate. Residue Cys202 participates in [4Fe-4S] cluster binding. Ser230, Ser231, Asn232, and Ser274 together coordinate (2E)-4-hydroxy-3-methylbut-2-enyl diphosphate. Residues Ser230, Ser231, Asn232, and Ser274 each contribute to the dimethylallyl diphosphate site. Ser230, Ser231, Asn232, and Ser274 together coordinate isopentenyl diphosphate.

This sequence belongs to the IspH family. It depends on [4Fe-4S] cluster as a cofactor.

It carries out the reaction isopentenyl diphosphate + 2 oxidized [2Fe-2S]-[ferredoxin] + H2O = (2E)-4-hydroxy-3-methylbut-2-enyl diphosphate + 2 reduced [2Fe-2S]-[ferredoxin] + 2 H(+). The enzyme catalyses dimethylallyl diphosphate + 2 oxidized [2Fe-2S]-[ferredoxin] + H2O = (2E)-4-hydroxy-3-methylbut-2-enyl diphosphate + 2 reduced [2Fe-2S]-[ferredoxin] + 2 H(+). The protein operates within isoprenoid biosynthesis; dimethylallyl diphosphate biosynthesis; dimethylallyl diphosphate from (2E)-4-hydroxy-3-methylbutenyl diphosphate: step 1/1. It functions in the pathway isoprenoid biosynthesis; isopentenyl diphosphate biosynthesis via DXP pathway; isopentenyl diphosphate from 1-deoxy-D-xylulose 5-phosphate: step 6/6. In terms of biological role, catalyzes the conversion of 1-hydroxy-2-methyl-2-(E)-butenyl 4-diphosphate (HMBPP) into a mixture of isopentenyl diphosphate (IPP) and dimethylallyl diphosphate (DMAPP). Acts in the terminal step of the DOXP/MEP pathway for isoprenoid precursor biosynthesis. The sequence is that of 4-hydroxy-3-methylbut-2-enyl diphosphate reductase from Xanthomonas euvesicatoria pv. vesicatoria (strain 85-10) (Xanthomonas campestris pv. vesicatoria).